Reading from the N-terminus, the 77-residue chain is Translation initiation factor IF-1, chloroplastic (77 aa).

Positions methionine 1 to arginine 71 constitute an S1-like domain.

This sequence belongs to the IF-1 family. As to quaternary structure, component of the 30S ribosomal translation pre-initiation complex which assembles on the 30S ribosome in the order IF-2 and IF-3, IF-1 and N-formylmethionyl-tRNA(fMet); mRNA recruitment can occur at any time during PIC assembly.

It is found in the plastid. Its subcellular location is the chloroplast. In terms of biological role, one of the essential components for the initiation of protein synthesis. Stabilizes the binding of IF-2 and IF-3 on the 30S subunit to which N-formylmethionyl-tRNA(fMet) subsequently binds. Helps modulate mRNA selection, yielding the 30S pre-initiation complex (PIC). Upon addition of the 50S ribosomal subunit IF-1, IF-2 and IF-3 are released leaving the mature 70S translation initiation complex. This is Translation initiation factor IF-1, chloroplastic from Antirrhinum majus (Garden snapdragon).